A 399-amino-acid polypeptide reads, in one-letter code: STOREKEEPER protein (399 aa).

Disordered regions lie at residues 1–160 and 250–301; these read MAPK…RSLW and GISN…EEQQ. The span at 20–54 shows a compositional bias: acidic residues; that stretch reads EEQELVEESQEEEEQQSREEEGEEESGEETEEDEE. A compositionally biased stretch (polar residues) spans 69 to 79; that stretch reads KLVQTPQKPQF. 2 stretches are compositionally biased toward low complexity: residues 80-100 and 116-125; these read SSESGSENGSGSDSEAESGNS and AAKAATPSKP. Basic and acidic residues-rich tracts occupy residues 143–152 and 270–299; these read KIAEEEEKKS and KTVEVKKSSEPKKSAKVSKPKDDEKQKEEE.

It belongs to the GeBP family. In terms of tissue distribution, expressed in tubers and in leaves treated with sucrose.

It is found in the nucleus. May act as a transcriptional regulator. Binds specifically to the B-box motif, a promoter element that is required for the tuber-specific and sucrose inducible expression of the patatin gene. This is STOREKEEPER protein from Solanum tuberosum (Potato).